We begin with the raw amino-acid sequence, 306 residues long: Metal ABC transporter substrate-binding lipoprotein SloC (306 aa).

Positions 1–19 (MKKLSLLLLVCLSLLGLFA) are cleaved as a signal peptide. The N-palmitoyl cysteine moiety is linked to residue cysteine 20. A lipid anchor (S-diacylglycerol cysteine) is attached at cysteine 20. Residues histidine 64, histidine 136, glutamate 202, and aspartate 277 each contribute to the a divalent metal cation site.

It belongs to the bacterial solute-binding protein 9 family. Lipoprotein receptor antigen (Lrai) subfamily.

The protein resides in the cell membrane. Its function is as follows. Part of the ATP-binding cassette (ABC) transport system SloABC involved in metal import. Binds a metal with high affinity and specificity and delivers it to the membrane permease for translocation into the cytoplasm. May act as an adhesin which is involved on adherence to extracellular matrix. It is an important factor in pathogenesis and infection. May contribute to the formation and accumulation of dental plaque. In Streptococcus mutans serotype c (strain ATCC 700610 / UA159), this protein is Metal ABC transporter substrate-binding lipoprotein SloC (sloC).